The sequence spans 177 residues: Interleukin-1 receptor antagonist protein (177 aa).

Positions 1-25 are cleaved as a signal peptide; it reads MEVSRYLCSYLISFLLFLFHSETAC. A disulfide bridge connects residues cysteine 91 and cysteine 141. Residue asparagine 109 is glycosylated (N-linked (GlcNAc...) asparagine).

Belongs to the IL-1 family.

It is found in the secreted. Anti-inflammatory antagonist of interleukin-1 family of proinflammatory cytokines such as interleukin-1beta/IL1B and interleukin-1alpha/IL1A. Protects from immune dysregulation and uncontrolled systemic inflammation triggered by IL1 for a range of innate stimulatory agents such as pathogens. The chain is Interleukin-1 receptor antagonist protein (IL1RN) from Sus scrofa (Pig).